A 907-amino-acid chain; its full sequence is Glutamate receptor 1 (907 aa).

The signal sequence occupies residues 1–18 (MPYIFAFFCTGFLGAVVG). At 19–536 (ANFPNNIQIG…GVFSFLDPLA (518 aa)) the chain is on the extracellular side. N-linked (GlcNAc...) asparagine glycosylation is found at asparagine 63, asparagine 249, asparagine 257, asparagine 363, asparagine 401, and asparagine 406. A disulfide bridge links cysteine 75 with cysteine 323. Residues proline 492, threonine 494, and arginine 499 each contribute to the L-glutamate site. The chain crosses the membrane as a helical span at residues 537 to 557 (YEIWMCIVFAYIGVSVVLFLV). At 558–584 (SRFSPYEWHSEEFEEGRDQTTSDQSNE) the chain is on the cytoplasmic side. Residues 585–600 (FGIFNSLWFSLGAFMQ) constitute an intramembrane region (helical; Pore-forming). The stretch at 601 to 603 (QGC) is an intramembrane region. A lipid anchor (S-palmitoyl cysteine) is attached at cysteine 603. Topologically, residues 604 to 609 (DISPRS) are cytoplasmic. Residues 610-630 (LSGRIVGGVWWFFTLIIISSY) form a helical membrane-spanning segment. Topologically, residues 631 to 805 (TANLAAFLTV…DKTSALSLSN (175 aa)) are extracellular. Serine 645 is subject to Phosphoserine. Positions 668 and 669 each coordinate L-glutamate. Residue serine 710 is modified to Phosphoserine; by PKC. Residue glutamate 719 participates in L-glutamate binding. Cysteines 732 and 787 form a disulfide. A helical membrane pass occupies residues 806–826 (VAGVFYILIGGLGLAMLVALI). The Cytoplasmic portion of the chain corresponds to 827–907 (EFCYKSRSES…SGMPLGATGL (81 aa)). Residue cysteine 829 is the site of S-palmitoyl cysteine attachment. Residue serine 849 is modified to Phosphoserine; by PKC, PKA and CAMK2. A disordered region spans residues 857 to 881 (STLPRNSGAGASGGGGSGENGRVVS). Phosphoserine; by PKC, PKA and PKG/PRKG2 is present on serine 863. The span at 866 to 875 (GASGGGGSGE) shows a compositional bias: gly residues. Residues 904-907 (ATGL) carry the PDZ-binding motif.

Belongs to the glutamate-gated ion channel (TC 1.A.10.1) family. GRIA1 subfamily. In terms of assembly, homotetramer or heterotetramer of pore-forming glutamate receptor subunits; heteromeric assembly can be the result of both receptor subtype and flip-flop forms and according the composition, one partner can be dominant with respect to the fast desensitizing current component, whereas the other can determine the steady-state component. Tetramers may be formed by the dimerization of dimers. Found in a complex with GRIA2, GRIA3, GRIA4, CNIH2, CNIH3, CACNG2, CACNG3, CACNG4, CACNG5, CACNG7 and CACNG8. Interacts with HIP1 and RASGRF2. Interacts with SYNDIG1 and GRIA2. Interacts with DLG1 (via C-terminus). Interacts with LRFN1. Interacts with PRKG2. Interacts with CNIH2 and CACNG2. Interacts with CACNG5; this interaction modulates the gating. Interacts (via C-terminus) with PDLIM4 (via LIM domain); this interaction as well as the interaction of PDLIM4 with alpha-actinin is required for their colocalization in early endosomes. Interacts with SNX27 (via PDZ domain); the interaction is required for recycling to the plasma membrane when endocytosed and prevent degradation in lysosomes. Interacts (via PDZ-binding motif) with SHANK3 (via PDZ domain). Interacts with CACNG3; associates GRIA1 with the adapter protein complex 4 (AP-4) to target GRIA1 to the somatodendritic compartment of neurons. Interacts with CACNG2; this interaction mediates traffick to the plasma membrane and modulation of desensitization. Interaction with CNIH2 and CNIH3; this interaction promotes expression at the plasma membrane and extensively modulates their gating properties by slowing deactivation and desensitization kinetics. Found in a complex with GRIA2, GRIA3, GRIA4, DLG4, CACNG8 and CNIH2. In terms of processing, phosphorylated at Ser-645. Phosphorylated at Ser-710 by PKC. Phosphorylated at Ser-849 by PKC, PKA and CAMK2. Phosphorylated at Ser-863 by PKC, PKA and PRKG2. Phosphorylation of Ser-863 is reduced by induction of long-term depression and increased by induction of long-term potentiation. Post-translationally, palmitoylated. Depalmitoylated by CPT1C and upon L-glutamate stimulation. ZDHHC3/GODZ specifically palmitoylates Cys-603, which leads to Golgi retention and decreased cell surface expression. In contrast, Cys-829 palmitoylation does not affect cell surface expression but regulates stimulation-dependent endocytosis. In terms of tissue distribution, detected in cerebellum (at protein level).

It is found in the cell membrane. Its subcellular location is the endoplasmic reticulum membrane. The protein resides in the postsynaptic cell membrane. It localises to the postsynaptic density membrane. The protein localises to the cell projection. It is found in the dendrite. Its subcellular location is the dendritic spine. The protein resides in the early endosome membrane. It localises to the recycling endosome membrane. The protein localises to the presynapse. It is found in the synapse. The enzyme catalyses Ca(2+)(in) = Ca(2+)(out). The catalysed reaction is Na(+)(in) = Na(+)(out). It carries out the reaction Mg(2+)(in) = Mg(2+)(out). It catalyses the reaction Li(+)(in) = Li(+)(out). The enzyme catalyses K(+)(in) = K(+)(out). The catalysed reaction is Sr(2+)(in) = Sr(2+)(out). With respect to regulation, glutamate-gated receptor activity inhibited by DNQX (6,7-dinitroquinoxaline-2,3-dione). In terms of biological role, ionotropic glutamate receptor that functions as a ligand-gated cation channel, gated by L-glutamate and glutamatergic agonists such as alpha-amino-3-hydroxy-5-methyl-4-isoxazolepropionic acid (AMPA), quisqualic acid, and kainic acid. L-glutamate acts as an excitatory neurotransmitter at many synapses in the central nervous system. Binding of the excitatory neurotransmitter L-glutamate induces a conformation change, leading to the opening of the cation channel, and thereby converts the chemical signal to an electrical impulse upon entry of monovalent and divalent cations such as sodium and calcium. The receptor then desensitizes rapidly and enters in a transient inactive state, characterized by the presence of bound agonist. In the presence of CACNG2 or CACNG4 or CACNG7 or CACNG8, shows resensitization which is characterized by a delayed accumulation of current flux upon continued application of L-glutamate. Resensitization is blocked by CNIH2 through interaction with CACNG8 in the CACNG8-containing AMPA receptors complex. Calcium (Ca(2+)) permeability depends on subunits composition and, heteromeric channels containing edited GRIA2 subunit are calcium-impermeable. Also permeable to other divalents cations such as strontium(2+) and magnesium(2+) and monovalent cations such as potassium(1+) and lithium(1+). The sequence is that of Glutamate receptor 1 from Rattus norvegicus (Rat).